Here is a 354-residue protein sequence, read N- to C-terminus: Photosystem II protein D1 2 (354 aa).

The next 3 helical transmembrane spans lie at 29–46 (YIGW…TATT), 118–133 (HFLI…EWEL), and 142–156 (WIAV…AATA). Chlorophyll a is bound at residue histidine 118. Tyrosine 126 provides a ligand contact to pheophytin a. Aspartate 170 and glutamate 189 together coordinate [CaMn4O5] cluster. The helical transmembrane segment at 197–218 (FHQLGVAGVFGGALFSAMHGSL) threads the bilayer. Histidine 198 is a chlorophyll a binding site. A quinone is bound by residues histidine 215 and 264 to 265 (SF). Histidine 215 is a Fe cation binding site. Histidine 272 lines the Fe cation pocket. The helical transmembrane segment at 274-288 (FLAAWPVIGIWFTAL) threads the bilayer. Residues histidine 332, glutamate 333, aspartate 342, and alanine 344 each contribute to the [CaMn4O5] cluster site. Positions 345 to 354 (AVEVAPAVRG) are excised as a propeptide.

This sequence belongs to the reaction center PufL/M/PsbA/D family. PSII is composed of 1 copy each of membrane proteins PsbA, PsbB, PsbC, PsbD, PsbE, PsbF, PsbH, PsbI, PsbJ, PsbK, PsbL, PsbM, PsbT, PsbX, PsbY, PsbZ, Psb30/Ycf12, peripheral proteins PsbO, CyanoQ (PsbQ), PsbU, PsbV and a large number of cofactors. It forms dimeric complexes. Requires The D1/D2 heterodimer binds P680, chlorophylls that are the primary electron donor of PSII, and subsequent electron acceptors. It shares a non-heme iron and each subunit binds pheophytin, quinone, additional chlorophylls, carotenoids and lipids. D1 provides most of the ligands for the Mn4-Ca-O5 cluster of the oxygen-evolving complex (OEC). There is also a Cl(-1) ion associated with D1 and D2, which is required for oxygen evolution. The PSII complex binds additional chlorophylls, carotenoids and specific lipids. as cofactor. Post-translationally, tyr-161 forms a radical intermediate that is referred to as redox-active TyrZ, YZ or Y-Z. In terms of processing, C-terminally processed by CtpA; processing is essential to allow assembly of the oxygen-evolving complex and thus photosynthetic growth.

It localises to the cellular thylakoid membrane. It carries out the reaction 2 a plastoquinone + 4 hnu + 2 H2O = 2 a plastoquinol + O2. In terms of biological role, photosystem II (PSII) is a light-driven water:plastoquinone oxidoreductase that uses light energy to abstract electrons from H(2)O, generating O(2) and a proton gradient subsequently used for ATP formation. It consists of a core antenna complex that captures photons, and an electron transfer chain that converts photonic excitation into a charge separation. The D1/D2 (PsbA/PsbD) reaction center heterodimer binds P680, the primary electron donor of PSII as well as several subsequent electron acceptors. This is Photosystem II protein D1 2 from Synechococcus sp. (strain JA-2-3B'a(2-13)) (Cyanobacteria bacterium Yellowstone B-Prime).